Reading from the N-terminus, the 467-residue chain is Membrane-bound acylglycerophosphatidylinositol O-acyltransferase mboat7 (467 aa).

Over 1-5 (MSPDE) the chain is Cytoplasmic. Residues 6 to 22 (LVYLGILAATIPVGFLF) form a helical membrane-spanning segment. The Lumenal segment spans residues 23–33 (RYLSPPVKQGA). The helical transmembrane segment at 34 to 57 (ALLLGLIISIATCGIHTLHSLCTV) threads the bilayer. Over 58–73 (LGTWIIIKINWRSAPA) the chain is Cytoplasmic. A helical transmembrane segment spans residues 74-93 (LSLAWTFLYLLFFRLVTWFG). At 94-193 (LPQPTPFANA…LPGKEPCLQR (100 aa)) the chain is on the lumenal side. A helical transmembrane segment spans residues 194 to 211 (LKMVPVYGLLFIAVNSVF). Residues 212 to 230 (PLSYVRTEDFLEHNYFYRF) lie on the Cytoplasmic side of the membrane. A helical membrane pass occupies residues 231-260 (FYMVAIFFVFRMRFYSAWCGAEAGCISAGL). Topologically, residues 261 to 421 (GCYPQGALSK…LKASDTISYW (161 aa)) are lumenal. The N-linked (GlcNAc...) asparagine glycan is linked to N316. The helical transmembrane segment at 422-442 (SSIYFVIHIIAIVCIAVGQFM) threads the bilayer. Residues 443 to 467 (KGGRKREKRERGEGEKEDAVREKAE) are Cytoplasmic-facing. Residues 447 to 467 (KREKRERGEGEKEDAVREKAE) are disordered. Positions 451-467 (RERGEGEKEDAVREKAE) are enriched in basic and acidic residues.

This sequence belongs to the membrane-bound acyltransferase family.

Its subcellular location is the endoplasmic reticulum membrane. The enzyme catalyses a 1-acyl-sn-glycero-3-phospho-(1D-myo-inositol) + (5Z,8Z,11Z,14Z)-eicosatetraenoyl-CoA = a 1-acyl-2-(5Z,8Z,11Z,14Z-eicosatetraenoyl)-sn-glycero-3-phospho-(1D-myo-inositol) + CoA. It carries out the reaction (5Z,8Z,11Z,14Z)-eicosatetraenoyl-CoA + 1-hexadecanoyl-sn-glycero-3-phosphocholine = 1-hexadecanoyl-2-(5Z,8Z,11Z,14Z-eicosatetraenoyl)-sn-glycero-3-phosphocholine + CoA. It catalyses the reaction a 1-acyl-sn-glycero-3-phospho-(1D-myo-inositol) + an acyl-CoA = a 1,2-diacyl-sn-glycero-3-phospho-(1D-myo-inositol) + CoA. The catalysed reaction is 1-octadecanoyl-sn-glycero-3-phospho-(1D-myo-inositol) + (5Z,8Z,11Z,14Z)-eicosatetraenoyl-CoA = 1-octadecanoyl-2-(5Z,8Z,11Z,14Z-eicosatetraenoyl)-sn-glycero-3-phospho-(1D-myo-inositol) + CoA. Its pathway is lipid metabolism; phospholipid metabolism. Its function is as follows. Acyltransferase which catalyzes the transfer of an acyl group from an acyl-CoA to a lysophosphatidylinositol (1-acylglycerophosphatidylinositol or LPI) leading to the production of a phosphatidylinositol (1,2-diacyl-sn-glycero-3-phosphoinositol or PI) and participates in the reacylation step of the phospholipid remodeling pathway also known as the Lands cycle. Prefers arachidonoyl-CoA as the acyl donor, thus contributing to the regulation of free levels arachidonic acid in cell. The sequence is that of Membrane-bound acylglycerophosphatidylinositol O-acyltransferase mboat7 (mboat7) from Danio rerio (Zebrafish).